Consider the following 1240-residue polypeptide: DNA polymerase II large subunit (1240 aa).

This sequence belongs to the archaeal DNA polymerase II family. As to quaternary structure, heterodimer of a large subunit and a small subunit.

The enzyme catalyses DNA(n) + a 2'-deoxyribonucleoside 5'-triphosphate = DNA(n+1) + diphosphate. It catalyses the reaction Exonucleolytic cleavage in the 3'- to 5'-direction to yield nucleoside 5'-phosphates.. Possesses two activities: a DNA synthesis (polymerase) and an exonucleolytic activity that degrades single-stranded DNA in the 3'- to 5'-direction. Has a template-primer preference which is characteristic of a replicative DNA polymerase. In Methanopyrus kandleri (strain AV19 / DSM 6324 / JCM 9639 / NBRC 100938), this protein is DNA polymerase II large subunit.